The primary structure comprises 306 residues: N-acetylmuramic acid/N-acetylglucosamine kinase (306 aa).

Ser-12 serves as a coordination point for ATP. Asn-35 contributes to the substrate binding site. ATP is bound at residue Thr-124. Substrate-binding positions include 142-144 (GWG) and Asp-149. Ala-208 serves as a coordination point for ATP.

It belongs to the eukaryotic-type N-acetylglucosamine kinase family. It depends on Mg(2+) as a cofactor.

The protein resides in the cytoplasm. The enzyme catalyses N-acetyl-D-glucosamine + ATP = N-acetyl-D-glucosamine 6-phosphate + ADP + H(+). It catalyses the reaction N-acetyl-D-muramate + ATP = N-acetyl-D-muramate 6-phosphate + ADP + H(+). Its pathway is cell wall biogenesis; peptidoglycan recycling. Catalyzes the ATP-dependent phosphorylation of both cell wall (peptidoglycan) amino sugars, N-acetylmuramic acid (MurNAc) and N-acetylglucosamine (GlcNAc), at the 6-hydroxyl group. Neither the non-N-acetylated forms of the cell wall sugars, i.e., glucosamine and/or muramic acid, nor epimeric hexoses or 1,6-anhydro-MurNAc are substrates for the enzyme. May have a role in the rescue of the murein sugars GlcNAc and MurNAc released from muropeptides during cell wall turnover in C.acetobutylicum. The chain is N-acetylmuramic acid/N-acetylglucosamine kinase from Clostridium acetobutylicum (strain ATCC 824 / DSM 792 / JCM 1419 / IAM 19013 / LMG 5710 / NBRC 13948 / NRRL B-527 / VKM B-1787 / 2291 / W).